The following is a 97-amino-acid chain: Cornifin (97 aa).

A disordered region spans residues 1 to 42; the sequence is MSSQQQKQPCTPPPQPQQQQVKQPCQPPPQEPCVPKTKEPCH. S2 bears the N-acetylserine mark. 9 tandem repeats follow at residues 3–14, 18–29, 31–38, 39–46, 47–54, 55–62, 63–70, 71–78, and 79–85. The 2 X 12 AA approximate repeats stretch occupies residues 3–29; that stretch reads SQQQKQPCTPPPQPQQQQVKQPCQPPP. The 7 X 8 AA approximate tandem repeats stretch occupies residues 31-85; it reads EPCVPKTKEPCHPKVPEPCQPKVPEPCQPKVPEPCHPKVPEPCQPKVPEPCPSPV.

This sequence belongs to the cornifin (SPRR) family. In terms of tissue distribution, not detected in normal lung tissue but seen in tumor tissues. Cells around the keratin pearls contain high levels.

The protein localises to the cytoplasm. Cross-linked envelope protein of keratinocytes. It is a keratinocyte protein that first appears in the cell cytosol, but ultimately becomes cross-linked to membrane proteins by transglutaminase. All that results in the formation of an insoluble envelope beneath the plasma membrane. This Sus scrofa (Pig) protein is Cornifin (SPRP).